Here is a 406-residue protein sequence, read N- to C-terminus: Tyrosine--tRNA ligase (406 aa).

Residues 51–60 (PTAPDLHLGH) carry the 'HIGH' region motif. The short motif at 236–240 (KMSKS) is the 'KMSKS' region element. ATP is bound at residue K239. The S4 RNA-binding domain maps to 345–405 (IWICKAMVEG…GKRKFLRLIV (61 aa)).

The protein belongs to the class-I aminoacyl-tRNA synthetase family. TyrS type 2 subfamily. In terms of assembly, homodimer.

Its subcellular location is the cytoplasm. It catalyses the reaction tRNA(Tyr) + L-tyrosine + ATP = L-tyrosyl-tRNA(Tyr) + AMP + diphosphate + H(+). Its function is as follows. Catalyzes the attachment of tyrosine to tRNA(Tyr) in a two-step reaction: tyrosine is first activated by ATP to form Tyr-AMP and then transferred to the acceptor end of tRNA(Tyr). This Wolinella succinogenes (strain ATCC 29543 / DSM 1740 / CCUG 13145 / JCM 31913 / LMG 7466 / NCTC 11488 / FDC 602W) (Vibrio succinogenes) protein is Tyrosine--tRNA ligase.